An 89-amino-acid chain; its full sequence is MSLSTEKKAAIVAEFGRDAKDTGSSEVQIALLTAQINHLQAHFAEHKKDHHGRRGLLRMVSRRRKLLDYLKRTDLALYQSTIARLGLRR.

This sequence belongs to the universal ribosomal protein uS15 family. In terms of assembly, part of the 30S ribosomal subunit. Forms a bridge to the 50S subunit in the 70S ribosome, contacting the 23S rRNA.

Its function is as follows. One of the primary rRNA binding proteins, it binds directly to 16S rRNA where it helps nucleate assembly of the platform of the 30S subunit by binding and bridging several RNA helices of the 16S rRNA. Functionally, forms an intersubunit bridge (bridge B4) with the 23S rRNA of the 50S subunit in the ribosome. The protein is Small ribosomal subunit protein uS15 of Haemophilus influenzae (strain 86-028NP).